Reading from the N-terminus, the 613-residue chain is Putative adenosylhomocysteinase 3 (613 aa).

Composition is skewed to low complexity over residues 1–14 (MSVQVVSAAAAAKV) and 35–44 (AAAVGAMVPP). A disordered region spans residues 1–186 (MSVQVVSAAA…KQQKNSKGSS (186 aa)). An N-acetylserine modification is found at Ser2. The interval 2-111 (SVQVVSAAAA…DGGEALVSPD (110 aa)) is LISN domain, inhibits interaction with ITPR1. Residues 52–68 (APAPAPAAERPPAPGPG) are compositionally biased toward pro residues. Residues 70–80 (GPTAALSPAAG) show a composition bias toward low complexity. Ser109 bears the Phosphoserine mark. Residues 137–146 (RPTKIGRRSL) show a composition bias toward basic residues. Over residues 147-166 (SRSISQSSTDSYSSAASYTD) the composition is skewed to low complexity. Phosphoserine is present on residues Ser151, Ser154, Ser157, and Ser160. Substrate-binding residues include Thr238, Asp312, and Glu337. 338-340 (SVT) lines the NAD(+) pocket. 2 residues coordinate substrate: Lys367 and Asp371. Residues Asn372, 403 to 408 (GEVGKG), Glu424, Asn459, 480 to 482 (MGH), and Asn527 contribute to the NAD(+) site.

The protein belongs to the adenosylhomocysteinase family. As to quaternary structure, homotetramer. Forms heteromultimers with AHCYL1 (via the C-terminal region). Interacts with ITPR1; with lower affinity than AHCYL1 and maybe via ITPR1. Interacts with SLC4A4. Interacts with ZCCHC4. NAD(+) serves as cofactor. In terms of processing, phosphorylated during neuronal differentiation at the LISN domain. In terms of tissue distribution, highly expressed in cerebrum, cerebellum and kidney. Also expressed in thymus, spleen, testis, ovary and, at lower, levels in lung and liver (at protein level). In cerebellum, expressed in interneurons.

The protein resides in the cytoplasm. The protein localises to the microsome. It carries out the reaction S-adenosyl-L-homocysteine + H2O = L-homocysteine + adenosine. It participates in amino-acid biosynthesis; L-homocysteine biosynthesis; L-homocysteine from S-adenosyl-L-homocysteine: step 1/1. May regulate the electrogenic sodium/bicarbonate cotransporter SLC4A4 activity and Mg(2+)-sensitivity. On the contrary of its homolog AHCYL1, does not regulate ITPR1 sensitivity to inositol 1,4,5-trisphosphate. The chain is Putative adenosylhomocysteinase 3 (Ahcyl2) from Mus musculus (Mouse).